The following is a 266-amino-acid chain: MDFLKFIFYGIIQGLTEFIPVSSTAHLKIISQLFGVKDPGSSLSAIIQIGSVLAIFWYFRKYIFNTINSNSKILRPSFFSNKIYKSIFIGTIPIVLIGGIVKLFVTDFSNSFFRSNFSIAVVSILMSLIMFLADISTNKFINLSNHKYRNSLFIGISQAFAIIPGVSRSGATISMALLSGWDRKDAAKFSFLLGIPSISLAAFVEFITSINEFSTFPFLPLFVGLITTFFSSLLAIDFLLKYVSSNGLKIFIYYRLVFGILIILNL.

8 consecutive transmembrane segments (helical) span residues 1-21 (MDFLKFIFYGIIQGLTEFIPV), 39-59 (PGSSLSAIIQIGSVLAIFWYF), 86-106 (SIFIGTIPIVLIGGIVKLFVT), 117-137 (FSIAVVSILMSLIMFLADIST), 153-173 (FIGISQAFAIIPGVSRSGATI), 190-210 (SFLLGIPSISLAAFVEFITSI), 216-236 (FPFLPLFVGLITTFFSSLLAI), and 246-266 (NGLKIFIYYRLVFGILIILNL).

Belongs to the UppP family.

Its subcellular location is the cell inner membrane. The catalysed reaction is di-trans,octa-cis-undecaprenyl diphosphate + H2O = di-trans,octa-cis-undecaprenyl phosphate + phosphate + H(+). In terms of biological role, catalyzes the dephosphorylation of undecaprenyl diphosphate (UPP). Confers resistance to bacitracin. This chain is Undecaprenyl-diphosphatase, found in Prochlorococcus marinus (strain MIT 9515).